A 274-amino-acid polypeptide reads, in one-letter code: Carboxy-S-adenosyl-L-methionine synthase (274 aa).

S-adenosyl-L-methionine-binding positions include tyrosine 59, 93–95 (GCS), 149–150 (DI), asparagine 164, and arginine 231.

This sequence belongs to the class I-like SAM-binding methyltransferase superfamily. Cx-SAM synthase family. In terms of assembly, homodimer.

The enzyme catalyses prephenate + S-adenosyl-L-methionine = carboxy-S-adenosyl-L-methionine + 3-phenylpyruvate + H2O. Functionally, catalyzes the conversion of S-adenosyl-L-methionine (SAM) to carboxy-S-adenosyl-L-methionine (Cx-SAM). This Psychrobacter sp. (strain PRwf-1) protein is Carboxy-S-adenosyl-L-methionine synthase.